The sequence spans 207 residues: Imidazole glycerol phosphate synthase subunit HisH (207 aa).

The Glutamine amidotransferase type-1 domain maps to 1–207 (MIAIVDYNMG…ENFTKYRNLK (207 aa)). The active-site Nucleophile is Cys79. Catalysis depends on residues His185 and Glu187.

In terms of assembly, heterodimer of HisH and HisF.

It localises to the cytoplasm. The catalysed reaction is 5-[(5-phospho-1-deoxy-D-ribulos-1-ylimino)methylamino]-1-(5-phospho-beta-D-ribosyl)imidazole-4-carboxamide + L-glutamine = D-erythro-1-(imidazol-4-yl)glycerol 3-phosphate + 5-amino-1-(5-phospho-beta-D-ribosyl)imidazole-4-carboxamide + L-glutamate + H(+). The enzyme catalyses L-glutamine + H2O = L-glutamate + NH4(+). It functions in the pathway amino-acid biosynthesis; L-histidine biosynthesis; L-histidine from 5-phospho-alpha-D-ribose 1-diphosphate: step 5/9. IGPS catalyzes the conversion of PRFAR and glutamine to IGP, AICAR and glutamate. The HisH subunit catalyzes the hydrolysis of glutamine to glutamate and ammonia as part of the synthesis of IGP and AICAR. The resulting ammonia molecule is channeled to the active site of HisF. This is Imidazole glycerol phosphate synthase subunit HisH from Sulfurimonas denitrificans (strain ATCC 33889 / DSM 1251) (Thiomicrospira denitrificans (strain ATCC 33889 / DSM 1251)).